The primary structure comprises 614 residues: UvrABC system protein C (614 aa).

One can recognise a GIY-YIG domain in the interval 20–98 (TAPGVYRMYA…IKSLSPRYNV (79 aa)). Positions 207 to 242 (DELTRELGEQMQAASEALEFEQAARLRDLISSLRSM) constitute a UVR domain.

It belongs to the UvrC family. In terms of assembly, interacts with UvrB in an incision complex.

The protein resides in the cytoplasm. Functionally, the UvrABC repair system catalyzes the recognition and processing of DNA lesions. UvrC both incises the 5' and 3' sides of the lesion. The N-terminal half is responsible for the 3' incision and the C-terminal half is responsible for the 5' incision. The sequence is that of UvrABC system protein C from Stenotrophomonas maltophilia (strain R551-3).